The following is a 233-amino-acid chain: Translation initiation factor IF-3 (233 aa).

Disordered stretches follow at residues M1–R21 and L184–R233. Residues A193 to P211 show a composition bias toward low complexity. Residues A212–A223 show a composition bias toward pro residues. Over residues P224–R233 the composition is skewed to low complexity.

This sequence belongs to the IF-3 family. Monomer.

It localises to the cytoplasm. Its function is as follows. IF-3 binds to the 30S ribosomal subunit and shifts the equilibrium between 70S ribosomes and their 50S and 30S subunits in favor of the free subunits, thus enhancing the availability of 30S subunits on which protein synthesis initiation begins. This is Translation initiation factor IF-3 from Anaeromyxobacter dehalogenans (strain 2CP-C).